We begin with the raw amino-acid sequence, 298 residues long: Probable 3-hydroxyacyl-CoA dehydrogenase F54C8.1 (298 aa).

This sequence belongs to the 3-hydroxyacyl-CoA dehydrogenase family. Homodimer.

It is found in the mitochondrion matrix. It catalyses the reaction a (3S)-3-hydroxyacyl-CoA + NAD(+) = a 3-oxoacyl-CoA + NADH + H(+). It functions in the pathway lipid metabolism; fatty acid beta-oxidation. The polypeptide is Probable 3-hydroxyacyl-CoA dehydrogenase F54C8.1 (Caenorhabditis elegans).